We begin with the raw amino-acid sequence, 558 residues long: MADIRLDIAPDLIHNGVPQRLSDTIILNNRPTITLLSHFNNLFHELNIVKAPHVASSQTTINLYIRFHLLTRLHHRLQTVETSTLPNITQFKDHIRSFFQNEHQPIFQTLTNNDLSEEFVGVTTFGLSLFATSKLDAEQIERVQIETLTEGNITLKPFSADGLEVILDDSYIGVVGKIPGLEVHKFLDKCCREVPAQMGILTDEVKLLMRTGKLRIDGGYDFNCPASTTDVTHYGGYDQFSRQMFERLNLFYNISLSIIPVSALKTVHLFEKELSVLDADKSLLEQTWSAVASFVETWQVKSKVKADDPDEYEMTSLSTLRTNYDGTSTSSPFTDKKFIDWYIKTFSKTEKGSSLRRNELEEKSASSISTTVKKVKIHFSVQYFDDFKVNGHEKSIVVQTHKGEMSLDYYRKIGEVLSAIWKRGKSLAVPCFDYIKLGVEKAFHLAPVIMKKYNLTIDDIINFIDKGPSYLAKLDKIDDCSLISKLIITSVLPNIIQRVYKTDPSNNVMNSVIISRANNLLKSDRDRVLKKALSANVSSSNTSSHEHTQKIVLNKVTR.

The interval 539–558 (SSNTSSHEHTQKIVLNKVTR) is disordered.

In Avena sativa (Oat), this protein is Protein S10 (S10).